A 433-amino-acid polypeptide reads, in one-letter code: Energy-coupling factor transporter ATP-binding protein EcfA2 (433 aa).

Positions 25 to 389 (VRVKNLYAVY…QHIINSTSIQ (365 aa)) constitute an ABC transporter domain. Residue 62–69 (GNSGSGKS) coordinates ATP.

This sequence belongs to the ABC transporter superfamily. Energy-coupling factor EcfA family. In terms of assembly, forms a stable energy-coupling factor (ECF) transporter complex composed of 2 membrane-embedded substrate-binding proteins (S component), 2 ATP-binding proteins (A component) and 2 transmembrane proteins (T component).

It is found in the cell membrane. Functionally, ATP-binding (A) component of a common energy-coupling factor (ECF) ABC-transporter complex. Unlike classic ABC transporters this ECF transporter provides the energy necessary to transport a number of different substrates. In Ureaplasma parvum serovar 3 (strain ATCC 700970), this protein is Energy-coupling factor transporter ATP-binding protein EcfA2.